The following is an 81-amino-acid chain: Delta-conotoxin-like Ac6.3 (81 aa).

The signal sequence occupies residues M1–A22. A propeptide spanning residues D23 to R51 is cleaved from the precursor. Cystine bridges form between C54-C69, C61-C73, and C68-C78.

This sequence belongs to the conotoxin O1 superfamily. As to expression, expressed by the venom duct.

It localises to the secreted. Its function is as follows. Delta-conotoxins bind to site 6 of voltage-gated sodium channels (Nav) and inhibit the inactivation process. The chain is Delta-conotoxin-like Ac6.3 from Conus achatinus (Little frog cone).